The sequence spans 146 residues: Large ribosomal subunit protein uL11 (146 aa).

The protein belongs to the universal ribosomal protein uL11 family. In terms of assembly, part of the ribosomal stalk of the 50S ribosomal subunit. Interacts with L10 and the large rRNA to form the base of the stalk. L10 forms an elongated spine to which L12 dimers bind in a sequential fashion forming a multimeric L10(L12)X complex. One or more lysine residues are methylated.

Forms part of the ribosomal stalk which helps the ribosome interact with GTP-bound translation factors. This chain is Large ribosomal subunit protein uL11, found in Wolbachia pipientis wMel.